Here is a 527-residue protein sequence, read N- to C-terminus: Heat shock factor protein HSF8 (527 aa).

Residues proline 39–histidine 133 mediate DNA binding. Disordered stretches follow at residues arginine 128–serine 158, asparagine 241–glutamine 273, and serine 297–lysine 341. A compositionally biased stretch (low complexity) spans glycine 134 to proline 152. Polar residues predominate over residues serine 317–arginine 326.

This sequence belongs to the HSF family. As to quaternary structure, homotrimer. Post-translationally, exhibits temperature-dependent phosphorylation.

Its subcellular location is the nucleus. Its function is as follows. DNA-binding protein that specifically binds heat shock promoter elements (HSE) and activates transcription. The polypeptide is Heat shock factor protein HSF8 (HSF8) (Solanum lycopersicum (Tomato)).